The following is a 150-amino-acid chain: Histone H2A.1 (150 aa).

The residue at position 1 (Met1) is an N-acetylmethionine. Basic residues-rich tracts occupy residues 1–24 (MDAS…KKSV) and 141–150 (SKAKKSPKKA). 2 disordered regions span residues 1–26 (MDAS…SVTR) and 128–150 (RKEN…PKKA). 2 short sequence motifs (SPKK motif) span residues 139–142 (SPSK) and 146–149 (SPKK).

Belongs to the histone H2A family. As to quaternary structure, the nucleosome is a histone octamer containing two molecules each of H2A, H2B, H3 and H4 assembled in one H3-H4 heterotetramer and two H2A-H2B heterodimers. The octamer wraps approximately 147 bp of DNA. High expression in root meristematic tissues, moderate in whole shoot and very low in mature leaves.

The protein localises to the nucleus. It localises to the chromosome. Functionally, core component of nucleosome. Nucleosomes wrap and compact DNA into chromatin, limiting DNA accessibility to the cellular machineries which require DNA as a template. Histones thereby play a central role in transcription regulation, DNA repair, DNA replication and chromosomal stability. DNA accessibility is regulated via a complex set of post-translational modifications of histones, also called histone code, and nucleosome remodeling. In Pisum sativum (Garden pea), this protein is Histone H2A.1.